A 231-amino-acid chain; its full sequence is 2-phospho-L-lactate guanylyltransferase (231 aa).

It belongs to the CofC family. Homodimer.

The enzyme catalyses (2S)-2-phospholactate + GTP + H(+) = (2S)-lactyl-2-diphospho-5'-guanosine + diphosphate. It functions in the pathway cofactor biosynthesis; coenzyme F420 biosynthesis. Its function is as follows. Guanylyltransferase that catalyzes the activation of (2S)-2-phospholactate (2-PL) as (2S)-lactyl-2-diphospho-5'-guanosine, via the condensation of 2-PL with GTP. It is involved in the biosynthesis of coenzyme F420, a hydride carrier cofactor. The sequence is that of 2-phospho-L-lactate guanylyltransferase from Haloterrigena turkmenica (strain ATCC 51198 / DSM 5511 / JCM 9101 / NCIMB 13204 / VKM B-1734 / 4k) (Halococcus turkmenicus).